The following is a 572-amino-acid chain: Dihydroxy-acid dehydratase (572 aa).

Position 57 (Cys57) interacts with [2Fe-2S] cluster. Residue Asp89 participates in Mg(2+) binding. A [2Fe-2S] cluster-binding site is contributed by Cys130. Residues Asp131 and Lys132 each contribute to the Mg(2+) site. At Lys132 the chain carries N6-carboxylysine. Cys202 contacts [2Fe-2S] cluster. Position 453 (Glu453) interacts with Mg(2+). Ser479 (proton acceptor) is an active-site residue.

It belongs to the IlvD/Edd family. Homodimer. [2Fe-2S] cluster serves as cofactor. It depends on Mg(2+) as a cofactor.

The catalysed reaction is (2R)-2,3-dihydroxy-3-methylbutanoate = 3-methyl-2-oxobutanoate + H2O. It carries out the reaction (2R,3R)-2,3-dihydroxy-3-methylpentanoate = (S)-3-methyl-2-oxopentanoate + H2O. It participates in amino-acid biosynthesis; L-isoleucine biosynthesis; L-isoleucine from 2-oxobutanoate: step 3/4. It functions in the pathway amino-acid biosynthesis; L-valine biosynthesis; L-valine from pyruvate: step 3/4. Functionally, functions in the biosynthesis of branched-chain amino acids. Catalyzes the dehydration of (2R,3R)-2,3-dihydroxy-3-methylpentanoate (2,3-dihydroxy-3-methylvalerate) into 2-oxo-3-methylpentanoate (2-oxo-3-methylvalerate) and of (2R)-2,3-dihydroxy-3-methylbutanoate (2,3-dihydroxyisovalerate) into 2-oxo-3-methylbutanoate (2-oxoisovalerate), the penultimate precursor to L-isoleucine and L-valine, respectively. This chain is Dihydroxy-acid dehydratase, found in Streptococcus sanguinis (strain SK36).